The chain runs to 120 residues: Glycine cleavage system H protein (120 aa).

Residues 17–99 (IATVGITAHA…RGAGWFFKLK (83 aa)) enclose the Lipoyl-binding domain. K58 bears the N6-lipoyllysine mark.

The protein belongs to the GcvH family. In terms of assembly, the glycine cleavage system is composed of four proteins: P, T, L and H. Requires (R)-lipoate as cofactor.

The glycine cleavage system catalyzes the degradation of glycine. The H protein shuttles the methylamine group of glycine from the P protein to the T protein. In Allorhizobium ampelinum (strain ATCC BAA-846 / DSM 112012 / S4) (Agrobacterium vitis (strain S4)), this protein is Glycine cleavage system H protein.